The sequence spans 816 residues: Leucine--tRNA ligase (816 aa).

Positions P42–H52 match the 'HIGH' region motif. Positions K574–S578 match the 'KMSKS' region motif. ATP is bound at residue K577.

Belongs to the class-I aminoacyl-tRNA synthetase family.

The protein localises to the cytoplasm. It catalyses the reaction tRNA(Leu) + L-leucine + ATP = L-leucyl-tRNA(Leu) + AMP + diphosphate. The sequence is that of Leucine--tRNA ligase from Ruthia magnifica subsp. Calyptogena magnifica.